A 288-amino-acid polypeptide reads, in one-letter code: Ubiquitin thioesterase otubain-like (288 aa).

One can recognise an OTU domain in the interval 76–275 (SHIRFIRGDG…PGHYDLIYKA (200 aa)). Residue aspartate 84 is part of the active site. The active-site Nucleophile is cysteine 87. A substrate-binding site is contributed by isoleucine 175. Residues histidine 244 and histidine 268 contribute to the active site.

This sequence belongs to the peptidase C65 family.

It carries out the reaction Thiol-dependent hydrolysis of ester, thioester, amide, peptide and isopeptide bonds formed by the C-terminal Gly of ubiquitin (a 76-residue protein attached to proteins as an intracellular targeting signal).. In terms of biological role, hydrolase that can remove conjugated ubiquitin from proteins and plays an important regulatory role at the level of protein turnover by preventing degradation. Specifically cleaves 'Lys-48'-linked polyubiquitin. The sequence is that of Ubiquitin thioesterase otubain-like from Caenorhabditis briggsae.